Consider the following 205-residue polypeptide: Small ribosomal subunit protein uS4 (205 aa).

A compositionally biased stretch (basic and acidic residues) spans 1–16; it reads MSKRESSKYKIDRRMG. Residues 1–46 are disordered; sequence MSKRESSKYKIDRRMGENIWGRPKSPVNRREYGPGQHGQRRKSKLS. The 64-residue stretch at 94–157 folds into the S4 RNA-binding domain; the sequence is SRLDAIVYRA…KQLVSVLESV (64 aa).

The protein belongs to the universal ribosomal protein uS4 family. In terms of assembly, part of the 30S ribosomal subunit. Contacts protein S5. The interaction surface between S4 and S5 is involved in control of translational fidelity.

Its function is as follows. One of the primary rRNA binding proteins, it binds directly to 16S rRNA where it nucleates assembly of the body of the 30S subunit. Functionally, with S5 and S12 plays an important role in translational accuracy. This is Small ribosomal subunit protein uS4 from Sinorhizobium fredii (strain NBRC 101917 / NGR234).